The primary structure comprises 705 residues: Gamma-adducin (705 aa).

Polar residues predominate over residues 1-10 (MSSDTSQAVI). A disordered region spans residues 1-22 (MSSDTSQAVITTPPPPSMPHKE). S2 is modified (N-acetylserine). A phosphoserine mark is found at S31, S42, S64, S402, S414, S423, S442, and S461. Disordered stretches follow at residues 472–495 (EDPSKVSSGTPIKIEDPNQFVPLN), 535–556 (PSTMRFEDDDQGPPAPPNPFSH), 572–612 (KQQG…EENH), and 658–705 (EITI…KVEA). Residue K484 forms a Glycyl lysine isopeptide (Lys-Gly) (interchain with G-Cter in SUMO2) linkage. Residues S583, S585, S590, S672, S676, S678, and S680 each carry the phosphoserine modification. Positions 590-605 (SVSQIQSQTQSPQSVP) are enriched in low complexity. Residues 681 to 705 (PSKKKKKFRTPSFLKKNKKKEKVEA) are compositionally biased toward basic residues. Phosphoserine; by PKC is present on S682. Positions 683-700 (KKKKKFRTPSFLKKNKKK) are interaction with calmodulin.

Belongs to the aldolase class II family. Adducin subfamily. As to quaternary structure, heterodimer of an alpha and a gamma subunit. In terms of processing, sumoylated. Proteolytically cleaved by asparagine endopeptidase (AEP) into 2 fragments. Overexpression of the 1-357 fragment induces neuronal apoptosis, and overexpression of either 1-357 or 358-706 fragment increases the degeneration of dendritic spines. Overexpression of the 1-357 fragment impairs neurite outgrowth by downregulating the expression of Rac2, and induces synaptic dysfunction and cognitive impairments in tau P301S transgenic mice, a mouse model for Alzheimer disease (AD). As to expression, expressed in kidney, brain, spleen, liver and heart. Expressed in renal interlobular arteries, afferent/efferent arterioles, parietal glomerular epithelial cells and microvilli of the luminal surface of the proximal tubule (at protein level). Expressed in podocytes (at protein level) Expressed in renal cortex (at protein level). Expressed in primary vascular smooth muscle cells (VSMCs) of the kidney (at protein level). Expressed in tubular cells and glomeruli (at protein level).

The protein localises to the cytoplasm. Its subcellular location is the cytoskeleton. The protein resides in the cell membrane. Membrane-cytoskeleton-associated protein that promotes the assembly of the spectrin-actin network. Plays a role in actin filament capping. Binds to calmodulin. Involved in myogenic reactivity of the renal afferent arteriole (Af-art), renal interlobular arteries and middle cerebral artery (MCA) to increased perfusion pressure. Involved in regulation of potassium channels in the vascular smooth muscle cells (VSMCs) of the Af-art and MCA ex vivo. Involved in regulation of glomerular capillary pressure, glomerular filtration rate (GFR) and glomerular nephrin expression in response to hypertension. Involved in renal blood flow (RBF) autoregulation. Plays a role in podocyte structure and function. Regulates globular monomer actin (G-actin) and filamentous polymer actin (F-actin) ratios in the primary podocytes affecting actin cytoskeleton organization. Regulates expression of synaptopodin, RhoA, Rac1 and CDC42 in the renal cortex and the primary podocytes. Regulates expression of nephrin in the glomeruli and in the primary podocytes, expression of nephrin and podocinin in the renal cortex, and expression of focal adhesion proteins integrin alpha-3 and integrin beta-1 in the glomeruli. Involved in cell migration and cell adhesion of podocytes, and in podocyte foot process effacement. Regulates expression of profibrotics markers MMP2, MMP9, TGF beta-1, tubular tight junction protein E-cadherin, and mesenchymal markers vimentin and alpha-SMA. Promotes the growth of neurites. This is Gamma-adducin (Add3) from Rattus norvegicus (Rat).